Consider the following 730-residue polypeptide: MSWDDGKHTKVKRVQLTFDDVIRSIEVEYDGTSLKSQPRGTAGTKIDGFTLSSDEYITEVNGYYKTTFSGEVITSLTFKTNKRTYGTYGNKTSSYFSVAAPKDNQIVGFLGSSSHALNSIDAHFAPAPPPGSTGAKPGASGIGSDSGSIGSAGTNPGADGTRETEKNAGGSKPSSGSAGTNPGASAVGNGETEKNAGGSKPSSGSAGTNPGASAGGNGETEKNVGGSKPSSGKAGTNPGANAGGNGGTEKNAGGSKSSSGSARTNPGASAGGNGETVSNIGDTESNAGGSKSNDGANNGASGIESNAGSTGTNFGAGGTGGIGDTESDAGGSKTNSGNGGTNDGASGIGSNDGSTGTNPGAGGGTDSNIEGTENNVGGKETNPGASGIGNSDGSTGTSPEGTESNADGTKTNTGGKESNTGSESNTNSSPQKLEAQGGNGGNQWDDGTDHDGVMKIHVAVGGLGIEQIRFDYVKNGQLKEGPFHGVKGRGGTSTIEISHPDEYLVSVEGLYDSSNIIQGIQFQSNKHTSQYFGYEYYGDGTQFSLQVNEKKIIGFHGFADSHLNSLGAYFVPISSSSSSLTPPPNKVKAQGGSYGETFDDGAFDHVRKVYVGQGDSGVAYVKFDYEKDGKKETQEHGKMTLSGTEEFEVDSDDYITSMEVYVDKVYGYKSEIVIALTFKTFKGETSPRFGIETENKYEVKDGKGGKLAGFHGKASDVLYAIGAYFIPAAN.

Residues 1–126 form the Jacalin-type lectin 1 domain; sequence MSWDDGKHTK…LNSIDAHFAP (126 aa). The segment at 121 to 450 is disordered; it reads DAHFAPAPPP…GNQWDDGTDH (330 aa). Low complexity-rich tracts occupy residues 138 to 153, 168 to 179, 196 to 207, and 248 to 261; these read GASGIGSDSGSIGSAG, AGGSKPSSGSAG, and TEKNAGGSKSSSGS. Over residues 275-307 the composition is skewed to polar residues; the sequence is ETVSNIGDTESNAGGSKSNDGANNGASGIESNA. Residues 314–323 show a composition bias toward gly residues; that stretch reads FGAGGTGGIG. Residues 343–358 are compositionally biased toward low complexity; the sequence is DGASGIGSNDGSTGTN. 2 stretches are compositionally biased toward polar residues: residues 366 to 375 and 388 to 416; these read DSNIEGTENN and IGNSDGSTGTSPEGTESNADGTKTNTGGK. The segment covering 417 to 429 has biased composition (low complexity); the sequence is ESNTGSESNTNSS. Jacalin-type lectin domains are found at residues 430–572 and 584–727; these read PQKL…YFVP and PNKV…YFIP.

The protein belongs to the jacalin lectin family.

This is Jacalin-related lectin 5 (JAL5) from Arabidopsis thaliana (Mouse-ear cress).